The chain runs to 512 residues: Beta-glucosidase 44 (512 aa).

The first 23 residues, Met1 to Gly23, serve as a signal peptide directing secretion. An a beta-D-glucoside-binding site is contributed by Gln58. Asn86 carries N-linked (GlcNAc...) asparagine glycosylation. Residues His159 and Asn204 to Glu205 contribute to the a beta-D-glucoside site. Glu205 acts as the Proton donor in catalysis. Cys224 and Cys231 are joined by a disulfide. An N-linked (GlcNAc...) asparagine glycan is attached at Asn230. Tyr347 and Glu419 together coordinate a beta-D-glucoside. Residue Glu419 is the Nucleophile of the active site. Asn427 carries N-linked (GlcNAc...) asparagine glycosylation. A beta-D-glucoside is bound by residues Trp466, Glu473 to Trp474, and Phe482.

Belongs to the glycosyl hydrolase 1 family. As to quaternary structure, homodimer.

The protein resides in the secreted. It carries out the reaction Hydrolysis of terminal, non-reducing beta-D-glucosyl residues with release of beta-D-glucose.. Hydrolyzes p-nitrophenyl beta-D-glucoside, p-nitrophenyl beta-D-mannoside, cellobiose, 4-methylumbelliferyl-beta-D-glucoside, laminarin, amygdalin, esculin and gentiobiose. The chain is Beta-glucosidase 44 from Arabidopsis thaliana (Mouse-ear cress).